The sequence spans 141 residues: Hemoglobin subunit alpha (141 aa).

In terms of domain architecture, Globin spans 1 to 141; sequence VLSPADKTNV…VSTVLTSKYR (141 aa). S3 is modified (phosphoserine). Residue K7 is modified to N6-succinyllysine. At T8 the chain carries Phosphothreonine. An N6-succinyllysine modification is found at K11. K16 bears the N6-acetyllysine; alternate mark. K16 bears the N6-succinyllysine; alternate mark. The residue at position 24 (Y24) is a Phosphotyrosine. K40 bears the N6-succinyllysine mark. H58 serves as a coordination point for O2. H87 is a heme b binding site. Residue S102 is modified to Phosphoserine. T108 carries the phosphothreonine modification. Phosphoserine is present on residues S124 and S131. Phosphothreonine occurs at positions 134 and 137. S138 carries the phosphoserine modification.

It belongs to the globin family. As to quaternary structure, heterotetramer of two alpha chains and two beta chains. Red blood cells.

In terms of biological role, involved in oxygen transport from the lung to the various peripheral tissues. Its function is as follows. Hemopressin acts as an antagonist peptide of the cannabinoid receptor CNR1. Hemopressin-binding efficiently blocks cannabinoid receptor CNR1 and subsequent signaling. The protein is Hemoglobin subunit alpha (HBA) of Tursiops truncatus (Atlantic bottle-nosed dolphin).